Consider the following 259-residue polypeptide: Ribose-5-phosphate isomerase (259 aa).

It belongs to the ribose 5-phosphate isomerase family.

The protein localises to the cytoplasm. The catalysed reaction is aldehydo-D-ribose 5-phosphate = D-ribulose 5-phosphate. The protein operates within carbohydrate degradation; pentose phosphate pathway; D-ribose 5-phosphate from D-ribulose 5-phosphate (non-oxidative stage): step 1/1. The sequence is that of Ribose-5-phosphate isomerase (RKI1) from Vanderwaltozyma polyspora (strain ATCC 22028 / DSM 70294 / BCRC 21397 / CBS 2163 / NBRC 10782 / NRRL Y-8283 / UCD 57-17) (Kluyveromyces polysporus).